A 175-amino-acid polypeptide reads, in one-letter code: Ribosome maturation factor RimM (175 aa).

Positions Ser-94–Leu-166 constitute a PRC barrel domain.

This sequence belongs to the RimM family. As to quaternary structure, binds ribosomal protein uS19.

The protein resides in the cytoplasm. Functionally, an accessory protein needed during the final step in the assembly of 30S ribosomal subunit, possibly for assembly of the head region. Essential for efficient processing of 16S rRNA. May be needed both before and after RbfA during the maturation of 16S rRNA. It has affinity for free ribosomal 30S subunits but not for 70S ribosomes. The chain is Ribosome maturation factor RimM from Renibacterium salmoninarum (strain ATCC 33209 / DSM 20767 / JCM 11484 / NBRC 15589 / NCIMB 2235).